We begin with the raw amino-acid sequence, 315 residues long: Bifunctional pinoresinol-lariciresinol reductase (315 aa).

NADP(+) contacts are provided by residues 14 to 20 (GGTGYLG), Arg39, and Lys48. Catalysis depends on Lys142, which acts as the Proton acceptor. Arg146 is a binding site for NADP(+). Position 274 (His274) interacts with substrate.

Belongs to the NmrA-type oxidoreductase family. Isoflavone reductase subfamily. In terms of assembly, dimer.

It carries out the reaction (+)-lariciresinol + NADP(+) = (+)-pinoresinol + NADPH + H(+). It catalyses the reaction (-)-secoisolariciresinol + NADP(+) = (+)-lariciresinol + NADPH + H(+). Functionally, reductase involved in lignan (-)-hinokinin biosynthesis. Catalyzes the enantioselective conversion of (+)-pinoresinol into (+)-lariciresinol and of (+)-lariciresinol into (-)-secoisolariciresinol. Abstracts the 4R-hydride from the NADPH cofactor during catalysis. Has also a low phenylcoumaran benzylic ether reductase activity. In Linum corymbulosum (Linum), this protein is Bifunctional pinoresinol-lariciresinol reductase (PLR_Lc1).